We begin with the raw amino-acid sequence, 184 residues long: Dual specificity protein phosphatase 22 (184 aa).

Gly-2 carries the N-myristoyl glycine lipid modification. The 141-residue stretch at 4 to 144 (GMNKILPGLY…LQEFEKHEVH (141 aa)) folds into the Tyrosine-protein phosphatase domain. Residue Ser-58 is modified to Phosphoserine. Cys-88 (phosphocysteine intermediate) is an active-site residue. 5 residues coordinate a protein: Leu-89, Ala-90, Val-92, Ser-93, and Arg-94.

It belongs to the protein-tyrosine phosphatase family. Non-receptor class dual specificity subfamily. Monomer. Interacts with LCK; the interaction is direct. Interacts with UBR2; the interaction is direct. In terms of processing, myristoylation regulates subcellular location, and is necessary for activation of JNK. Ubiquitous. Highest expression seen in heart, placenta, lung, liver, kidney and pancreas.

It localises to the cytoplasm. The catalysed reaction is O-phospho-L-tyrosyl-[protein] + H2O = L-tyrosyl-[protein] + phosphate. It catalyses the reaction O-phospho-L-seryl-[protein] + H2O = L-seryl-[protein] + phosphate. It carries out the reaction O-phospho-L-threonyl-[protein] + H2O = L-threonyl-[protein] + phosphate. In terms of biological role, dual specificity phosphatase; can dephosphorylate both phosphotyrosine and phosphoserine or phosphothreonine residues. Activates the JNK signaling pathway. Inhibits T-cell receptor signaling and T-cell mediated immune responses, acting, at least in part, by inducing degradation of E3 ubiquitin ligase UBR2. Dephosphorylates and thereby induces 'Lys-48'-linked ubiquitination of UBR2, leading to proteasomal degradation of UBR2. Dephosphorylates and thereby inactivates tyrosine kinase LCK. Inhibits UBR2-mediated 'Lys-63'-linked ubiquitination of LCK. May play a role in B-cell receptor (BCR) signaling and B-cell function. This is Dual specificity protein phosphatase 22 (DUSP22) from Homo sapiens (Human).